Consider the following 275-residue polypeptide: Homeobox protein Hox-C12a (275 aa).

Disordered stretches follow at residues serine 101–methionine 129 and glutamine 148–proline 213. Residues serine 155 to serine 177 are compositionally biased toward low complexity. The segment covering aspartate 178–alanine 194 has biased composition (polar residues). The homeobox DNA-binding region spans threonine 207–methionine 266.

It belongs to the Abd-B homeobox family.

The protein resides in the nucleus. Functionally, sequence-specific transcription factor which is part of a developmental regulatory system that provides cells with specific positional identities on the anterior-posterior axis. This Takifugu rubripes (Japanese pufferfish) protein is Homeobox protein Hox-C12a (hoxc12a).